A 277-amino-acid polypeptide reads, in one-letter code: Shikimate dehydrogenase (NADP(+)) (277 aa).

Shikimate-binding positions include 15–17 and T64; that span reads SKS. Residue K68 is the Proton acceptor of the active site. Residues N89 and D104 each contribute to the shikimate site. NADP(+) is bound by residues 129–133, 153–158, and M217; these read GAGGA and NRTAKR. Position 219 (Y219) interacts with shikimate. Position 242 (G242) interacts with NADP(+).

This sequence belongs to the shikimate dehydrogenase family. In terms of assembly, homodimer.

It carries out the reaction shikimate + NADP(+) = 3-dehydroshikimate + NADPH + H(+). Its pathway is metabolic intermediate biosynthesis; chorismate biosynthesis; chorismate from D-erythrose 4-phosphate and phosphoenolpyruvate: step 4/7. Functionally, involved in the biosynthesis of the chorismate, which leads to the biosynthesis of aromatic amino acids. Catalyzes the reversible NADPH linked reduction of 3-dehydroshikimate (DHSA) to yield shikimate (SA). In Hydrogenovibrio crunogenus (strain DSM 25203 / XCL-2) (Thiomicrospira crunogena), this protein is Shikimate dehydrogenase (NADP(+)).